A 146-amino-acid polypeptide reads, in one-letter code: Hemoglobin subunit beta (146 aa).

Residue V1 is modified to N-acetylvaline. A Globin domain is found at 2-146 (HLSGEEKTAL…VANALAHKYH (145 aa)). S44 carries the phosphoserine modification. The residue at position 59 (K59) is an N6-acetyllysine. Position 63 (H63) interacts with heme b. K82 is subject to N6-acetyllysine. A heme b-binding site is contributed by H92. C93 is subject to S-nitrosocysteine. K144 is subject to N6-acetyllysine.

It belongs to the globin family. As to quaternary structure, heterotetramer of two alpha chains and two beta chains. Red blood cells.

In terms of biological role, involved in oxygen transport from the lung to the various peripheral tissues. In Tamiasciurus hudsonicus (American red squirrel), this protein is Hemoglobin subunit beta.